Reading from the N-terminus, the 891-residue chain is Alanine--tRNA ligase (891 aa).

4 residues coordinate Zn(2+): His564, His568, Cys677, and His681.

It belongs to the class-II aminoacyl-tRNA synthetase family. It depends on Zn(2+) as a cofactor.

It is found in the cytoplasm. The enzyme catalyses tRNA(Ala) + L-alanine + ATP = L-alanyl-tRNA(Ala) + AMP + diphosphate. Its function is as follows. Catalyzes the attachment of alanine to tRNA(Ala) in a two-step reaction: alanine is first activated by ATP to form Ala-AMP and then transferred to the acceptor end of tRNA(Ala). Also edits incorrectly charged Ser-tRNA(Ala) and Gly-tRNA(Ala) via its editing domain. This Rhodopseudomonas palustris (strain HaA2) protein is Alanine--tRNA ligase.